Consider the following 697-residue polypeptide: Potassium-transporting ATPase ATP-binding subunit (697 aa).

4 consecutive transmembrane segments (helical) span residues 55–75 (PIMFVVEIGFIITFILSFLPS), 79–99 (SIPGWFNITVSLILLFTVLFA), 245–265 (LTLIFLIVVVTLPIFTNYLGF), and 271–291 (VLVALLVCLIPTTIGGLLSAI). The active-site 4-aspartylphosphate intermediate is the Asp-324. ATP is bound by residues Asp-361, Glu-365, 393–400 (FKAETRMS), and Lys-412. Asp-535 and Asp-539 together coordinate Mg(2+). 3 helical membrane-spanning segments follow: residues 605 to 625 (FAIIPAMFTLAIPQMEALNIM), 633 to 653 (AILSALLFNAVIIPLLIPLAM), and 677 to 697 (GGVIVPFIGIKVIDIIVGLFI).

The protein belongs to the cation transport ATPase (P-type) (TC 3.A.3) family. Type IA subfamily. As to quaternary structure, the system is composed of three essential subunits: KdpA, KdpB and KdpC.

It is found in the cell membrane. The catalysed reaction is K(+)(out) + ATP + H2O = K(+)(in) + ADP + phosphate + H(+). In terms of biological role, part of the high-affinity ATP-driven potassium transport (or Kdp) system, which catalyzes the hydrolysis of ATP coupled with the electrogenic transport of potassium into the cytoplasm. This subunit is responsible for energy coupling to the transport system and for the release of the potassium ions to the cytoplasm. The chain is Potassium-transporting ATPase ATP-binding subunit from Bacillus cereus (strain ZK / E33L).